The following is a 927-amino-acid chain: Heat shock protein hsp98 (927 aa).

In terms of domain architecture, Clp R spans 2-162 (TSKMEFTDRA…TDAIQAIRGT (161 aa)). Repeat regions lie at residues 7-87 (FTDR…LVRL) and 99-162 (MAPS…IRGT). Positions 179 to 428 (LAKFTIDMTA…AVRVARESQP (250 aa)) are NBD1. Residue 224 to 231 (GEPGVGKT) participates in ATP binding. A coiled-coil region spans residues 429 to 553 (EIIDSLERKL…AALNAAAAET (125 aa)). Residues 454–473 (EASKARLEQAKKDAENVEEE) form a disordered region. The segment at 562 to 752 (VGPDQINEIV…IVVMTSNLGA (191 aa)) is NBD2. 635–642 (GPSGTGKT) is a binding site for ATP. A disordered region spans residues 908–927 (EDAVDEVAPESEMDEDLYDD).

It belongs to the ClpA/ClpB family. Homohexamer, forming a ring with a central pore.

It localises to the cytoplasm. It is found in the nucleus. In terms of biological role, required, in concert with Hsp40 and Hsp70 and small Hsps, for the dissociation, resolubilization and refolding of aggregates of damaged proteins after heat or other environmental stresses. Extracts proteins from aggregates by unfolding and threading them in an ATP-dependent process through the axial channel of the protein hexamer, after which they can be refolded by components of the Hsp70/Hsp40 chaperone system. This chain is Heat shock protein hsp98 (hsp98), found in Neurospora crassa (strain ATCC 24698 / 74-OR23-1A / CBS 708.71 / DSM 1257 / FGSC 987).